The primary structure comprises 98 residues: Small ribosomal subunit protein uS17 (98 aa).

This sequence belongs to the universal ribosomal protein uS17 family. In terms of assembly, part of the 30S ribosomal subunit.

Its function is as follows. One of the primary rRNA binding proteins, it binds specifically to the 5'-end of 16S ribosomal RNA. The sequence is that of Small ribosomal subunit protein uS17 from Mesomycoplasma hyopneumoniae (strain 232) (Mycoplasma hyopneumoniae).